A 238-amino-acid polypeptide reads, in one-letter code: Large ribosomal subunit protein uL2 (238 aa).

Residues 201 to 238 (FGGGGHQHPGRPKTIARGTSPGRTVGHVAARQTGRSRK) are disordered.

Belongs to the universal ribosomal protein uL2 family. In terms of assembly, part of the 50S ribosomal subunit. Forms a bridge to the 30S subunit in the 70S ribosome.

In terms of biological role, one of the primary rRNA binding proteins. Required for association of the 30S and 50S subunits to form the 70S ribosome, for tRNA binding and peptide bond formation. It has been suggested to have peptidyltransferase activity; this is somewhat controversial. Makes several contacts with the 16S rRNA in the 70S ribosome. The polypeptide is Large ribosomal subunit protein uL2 (Methanoregula boonei (strain DSM 21154 / JCM 14090 / 6A8)).